The sequence spans 208 residues: MTGKKRSASSSRWLQEHFSDKYVLQAQKKGLRSRAWFKLDEIQQSDKLFKPGMTIVDLGAAPGGWSQYAVTQIGGQGRIIACDLLPMDPIVGVDFLQGDFRDELVLKALLERVGDSKVQVVMSDMAPNMCGTPAVDIPRSMYLVELALEMSRDVLAPGGSFVVKVFQGEGFEEYLKEIRSLFAKVKVRKPDSSRARSREVYIVATGRK.

S-adenosyl-L-methionine-binding residues include glycine 63, tryptophan 65, aspartate 83, aspartate 99, and aspartate 124. Lysine 164 (proton acceptor) is an active-site residue.

Belongs to the class I-like SAM-binding methyltransferase superfamily. RNA methyltransferase RlmE family.

It localises to the cytoplasm. The enzyme catalyses uridine(2552) in 23S rRNA + S-adenosyl-L-methionine = 2'-O-methyluridine(2552) in 23S rRNA + S-adenosyl-L-homocysteine + H(+). In terms of biological role, specifically methylates the uridine in position 2552 of 23S rRNA at the 2'-O position of the ribose in the fully assembled 50S ribosomal subunit. In Enterobacter sp. (strain 638), this protein is Ribosomal RNA large subunit methyltransferase E.